The primary structure comprises 126 residues: Holo-[acyl-carrier-protein] synthase (126 aa).

Mg(2+)-binding residues include Asp9 and Glu58.

Belongs to the P-Pant transferase superfamily. AcpS family. It depends on Mg(2+) as a cofactor.

The protein localises to the cytoplasm. It catalyses the reaction apo-[ACP] + CoA = holo-[ACP] + adenosine 3',5'-bisphosphate + H(+). Transfers the 4'-phosphopantetheine moiety from coenzyme A to a Ser of acyl-carrier-protein. This is Holo-[acyl-carrier-protein] synthase from Escherichia coli (strain ATCC 8739 / DSM 1576 / NBRC 3972 / NCIMB 8545 / WDCM 00012 / Crooks).